An 80-amino-acid chain; its full sequence is Toxin TdNa1 (80 aa).

Positions 1–20 (MKGIILFISCLMLIDVVVES) are cleaved as a signal peptide. Positions 21–79 (RDAYPADWRGCKFSCFWGSSSWCNEECTSLGGSSGYCAWPACWCYGLPDSVRYYNNKCH) constitute an LCN-type CS-alpha/beta domain. 4 disulfides stabilise this stretch: C31–C78, C35–C57, C43–C62, and C47–C64.

Belongs to the long (4 C-C) scorpion toxin superfamily. Sodium channel inhibitor family. Beta subfamily. In terms of tissue distribution, expressed by the venom gland.

It is found in the secreted. Its function is as follows. Inhibits the sodium (Nav) currents in an apparent irreversible manner. Produces small depolarization and induces repetitive firing in squid axons. Is specific for arthropods (crickets, triatomides, crabs and squids), but is non-toxic to mice. The polypeptide is Toxin TdNa1 (Tityus discrepans (Venezuelan scorpion)).